Reading from the N-terminus, the 284-residue chain is MEMO1 family protein Saci_0089 (284 aa).

It belongs to the MEMO1 family.

This chain is MEMO1 family protein Saci_0089, found in Sulfolobus acidocaldarius (strain ATCC 33909 / DSM 639 / JCM 8929 / NBRC 15157 / NCIMB 11770).